The sequence spans 117 residues: Large ribosomal subunit protein uL18 (117 aa).

Belongs to the universal ribosomal protein uL18 family. As to quaternary structure, part of the 50S ribosomal subunit; part of the 5S rRNA/L5/L18/L25 subcomplex. Contacts the 5S and 23S rRNAs.

Its function is as follows. This is one of the proteins that bind and probably mediate the attachment of the 5S RNA into the large ribosomal subunit, where it forms part of the central protuberance. The chain is Large ribosomal subunit protein uL18 from Blochmanniella pennsylvanica (strain BPEN).